We begin with the raw amino-acid sequence, 256 residues long: Triosephosphate isomerase (256 aa).

9–11 contributes to the substrate binding site; that stretch reads NWK. Histidine 97 (electrophile) is an active-site residue. The Proton acceptor role is filled by glutamate 169. Substrate-binding positions include glycine 175, serine 214, and 235 to 236; that span reads GG.

This sequence belongs to the triosephosphate isomerase family. In terms of assembly, homodimer.

It is found in the cytoplasm. It carries out the reaction D-glyceraldehyde 3-phosphate = dihydroxyacetone phosphate. The protein operates within carbohydrate biosynthesis; gluconeogenesis. It participates in carbohydrate degradation; glycolysis; D-glyceraldehyde 3-phosphate from glycerone phosphate: step 1/1. Involved in the gluconeogenesis. Catalyzes stereospecifically the conversion of dihydroxyacetone phosphate (DHAP) to D-glyceraldehyde-3-phosphate (G3P). The chain is Triosephosphate isomerase from Aliivibrio fischeri (strain ATCC 700601 / ES114) (Vibrio fischeri).